The primary structure comprises 428 residues: Adenylosuccinate synthetase (428 aa).

GTP is bound by residues 12–18 (GDEGKGK) and 40–42 (GHT). Asp13 acts as the Proton acceptor in catalysis. Asp13 and Gly40 together coordinate Mg(2+). Residues 13-16 (DEGK), 38-41 (NAGH), Thr129, Arg143, Gln224, Thr239, and Arg303 contribute to the IMP site. His41 (proton donor) is an active-site residue. Residue 299 to 305 (VTTGRIR) participates in substrate binding. GTP-binding positions include Arg305, 331–333 (KVD), and 410–412 (AYG).

This sequence belongs to the adenylosuccinate synthetase family. As to quaternary structure, homodimer. It depends on Mg(2+) as a cofactor.

The protein localises to the cytoplasm. It catalyses the reaction IMP + L-aspartate + GTP = N(6)-(1,2-dicarboxyethyl)-AMP + GDP + phosphate + 2 H(+). It participates in purine metabolism; AMP biosynthesis via de novo pathway; AMP from IMP: step 1/2. Functionally, plays an important role in the de novo pathway of purine nucleotide biosynthesis. Catalyzes the first committed step in the biosynthesis of AMP from IMP. The protein is Adenylosuccinate synthetase of Francisella philomiragia subsp. philomiragia (strain ATCC 25017 / CCUG 19701 / FSC 153 / O#319-036).